The primary structure comprises 290 residues: ATP synthase gamma chain (290 aa).

This sequence belongs to the ATPase gamma chain family. As to quaternary structure, F-type ATPases have 2 components, CF(1) - the catalytic core - and CF(0) - the membrane proton channel. CF(1) has five subunits: alpha(3), beta(3), gamma(1), delta(1), epsilon(1). CF(0) has three main subunits: a, b and c.

It is found in the cell membrane. Produces ATP from ADP in the presence of a proton gradient across the membrane. The gamma chain is believed to be important in regulating ATPase activity and the flow of protons through the CF(0) complex. The polypeptide is ATP synthase gamma chain (Roseiflexus castenholzii (strain DSM 13941 / HLO8)).